Consider the following 576-residue polypeptide: Proline--tRNA ligase (576 aa).

It belongs to the class-II aminoacyl-tRNA synthetase family. ProS type 1 subfamily. Homodimer.

The protein localises to the cytoplasm. It carries out the reaction tRNA(Pro) + L-proline + ATP = L-prolyl-tRNA(Pro) + AMP + diphosphate. Catalyzes the attachment of proline to tRNA(Pro) in a two-step reaction: proline is first activated by ATP to form Pro-AMP and then transferred to the acceptor end of tRNA(Pro). As ProRS can inadvertently accommodate and process non-cognate amino acids such as alanine and cysteine, to avoid such errors it has two additional distinct editing activities against alanine. One activity is designated as 'pretransfer' editing and involves the tRNA(Pro)-independent hydrolysis of activated Ala-AMP. The other activity is designated 'posttransfer' editing and involves deacylation of mischarged Ala-tRNA(Pro). The misacylated Cys-tRNA(Pro) is not edited by ProRS. In Bordetella petrii (strain ATCC BAA-461 / DSM 12804 / CCUG 43448), this protein is Proline--tRNA ligase.